The chain runs to 235 residues: Ubiquinone/menaquinone biosynthesis C-methyltransferase UbiE (235 aa).

3 residues coordinate S-adenosyl-L-methionine: threonine 60, aspartate 81, and serine 126.

This sequence belongs to the class I-like SAM-binding methyltransferase superfamily. MenG/UbiE family.

The catalysed reaction is a 2-demethylmenaquinol + S-adenosyl-L-methionine = a menaquinol + S-adenosyl-L-homocysteine + H(+). The enzyme catalyses a 2-methoxy-6-(all-trans-polyprenyl)benzene-1,4-diol + S-adenosyl-L-methionine = a 5-methoxy-2-methyl-3-(all-trans-polyprenyl)benzene-1,4-diol + S-adenosyl-L-homocysteine + H(+). It participates in quinol/quinone metabolism; menaquinone biosynthesis; menaquinol from 1,4-dihydroxy-2-naphthoate: step 2/2. It functions in the pathway cofactor biosynthesis; ubiquinone biosynthesis. Methyltransferase required for the conversion of demethylmenaquinol (DMKH2) to menaquinol (MKH2) and the conversion of 2-polyprenyl-6-methoxy-1,4-benzoquinol (DDMQH2) to 2-polyprenyl-3-methyl-6-methoxy-1,4-benzoquinol (DMQH2). This is Ubiquinone/menaquinone biosynthesis C-methyltransferase UbiE from Geobacter sp. (strain M21).